A 319-amino-acid chain; its full sequence is Ribosomal RNA large subunit methyltransferase F (319 aa).

It belongs to the methyltransferase superfamily. METTL16/RlmF family.

It localises to the cytoplasm. The catalysed reaction is adenosine(1618) in 23S rRNA + S-adenosyl-L-methionine = N(6)-methyladenosine(1618) in 23S rRNA + S-adenosyl-L-homocysteine + H(+). In terms of biological role, specifically methylates the adenine in position 1618 of 23S rRNA. This is Ribosomal RNA large subunit methyltransferase F from Aliivibrio fischeri (strain ATCC 700601 / ES114) (Vibrio fischeri).